A 1237-amino-acid chain; its full sequence is ATP-dependent RNA helicase DEAH13 (1237 aa).

Disordered stretches follow at residues 1–51 (MASV…NSNV) and 115–148 (AMQL…EPTT). Residues 24-38 (SNKMQDKLNSNNNTG) show a composition bias toward polar residues. Positions 131–143 (SVEQNDNDDDSCM) are enriched in acidic residues. In terms of domain architecture, Helicase ATP-binding spans 251-443 (MEAINRHPAV…KRLFPNIPPL (193 aa)). 264-271 (GQTGCGKT) contacts ATP. Residues 367–370 (DEAH) carry the DEAH box motif. Residues 543–585 (DDDSNNQNSRFSSHGEDPSDIGDGNYDDDFEEEDMYESDEDRD) are disordered. Residues 567-585 (NYDDDFEEEDMYESDEDRD) are compositionally biased toward acidic residues. The Helicase C-terminal domain maps to 605–776 (ALRAAFNALA…GVILLMKSMN (172 aa)). The segment at 876-910 (EKKNESKDADKTVKQEDKQRKKDRKEKIKAARDRF) is disordered.

The protein belongs to the DEAD box helicase family. DEAH subfamily.

The enzyme catalyses ATP + H2O = ADP + phosphate + H(+). This chain is ATP-dependent RNA helicase DEAH13, found in Arabidopsis thaliana (Mouse-ear cress).